Reading from the N-terminus, the 634-residue chain is Nucleoside triphosphatase I (634 aa).

Residues 41–203 enclose the Helicase ATP-binding domain; that stretch reads FLGLDSMNSL…ALLVNLLRPG (163 aa). ATP is bound at residue 54–61; it reads QETGVGKT. A DEXH box motif is present at residues 140–143; sequence DECH. In terms of domain architecture, Helicase C-terminal spans 355 to 531; it reads SLYQALYEHS…EFSQLYRVLK (177 aa). The interval 456–523 is binding to the cap-specific mRNA (nucleoside-2'-O-)-methyltransferase; that stretch reads DIFILDMTWN…EIIQNKAREF (68 aa).

The protein belongs to the helicase family. NPH I subfamily. As to quaternary structure, monomer. Interacts (via C-terminus) with RAP94 (via N-terminus). Interacts with the cap-specific mRNA (nucleoside-2'-O-)-methyltransferase.

The protein localises to the virion. It carries out the reaction a ribonucleoside 5'-triphosphate + H2O = a ribonucleoside 5'-diphosphate + phosphate + H(+). In terms of biological role, DNA-dependent ATPase required for providing the needed energy to achieve the termination of early transcripts. Acts in concert with the RAP94 subunit of the virion RNA polymerase and the capping enzyme/VTF to catalyze release of UUUUUNU-containing nascent RNA from the elongation complex. NPH-I must bind ssDNA in order to exhibit ATPase activity. This Homo sapiens (Human) protein is Nucleoside triphosphatase I (NPH1).